The following is a 485-amino-acid chain: Chromosomal replication initiator protein DnaA (485 aa).

The tract at residues 1–74 is domain I, interacts with DnaA modulators; the sequence is MEKSKNIWSL…ILTNNGYDNV (74 aa). The segment at 74–140 is domain II; the sequence is VTIVFTNQSP…EEEPKNFKNP (67 aa). The domain III, AAA+ region stretch occupies residues 141-357; that stretch reads FLKKRYTFEN…AAVTKLKAYI (217 aa). The ATP site is built by Gly185, Gly187, Lys188, and Thr189. Positions 358–485 are domain IV, binds dsDNA; that stretch reads DLDNIEIDID…TELMNKIKKN (128 aa).

This sequence belongs to the DnaA family. As to quaternary structure, oligomerizes as a right-handed, spiral filament on DNA at oriC.

The protein resides in the cytoplasm. Plays an essential role in the initiation and regulation of chromosomal replication. ATP-DnaA binds to the origin of replication (oriC) to initiate formation of the DNA replication initiation complex once per cell cycle. Binds the DnaA box (a 9 base pair repeat at the origin) and separates the double-stranded (ds)DNA. Forms a right-handed helical filament on oriC DNA; dsDNA binds to the exterior of the filament while single-stranded (ss)DNA is stabiized in the filament's interior. The ATP-DnaA-oriC complex binds and stabilizes one strand of the AT-rich DNA unwinding element (DUE), permitting loading of DNA polymerase. After initiation quickly degrades to an ADP-DnaA complex that is not apt for DNA replication. Binds acidic phospholipids. The sequence is that of Chromosomal replication initiator protein DnaA from Borreliella afzelii (strain PKo) (Borrelia afzelii).